A 1788-amino-acid chain; its full sequence is Glutamine and serine-rich protein 1 (1788 aa).

Over residues 1–53 the composition is skewed to low complexity; the sequence is MDAHYAPAGFAEPPAPPASAATQPAAPAWAYEARVPAAASSPSCSGSSPSLKA. 3 disordered regions span residues 1–69, 472–498, and 532–617; these read MDAH…DVLQ, TRDL…VSQT, and SYSS…SKQD. Composition is skewed to polar residues over residues 60 to 69, 478 to 492, 532 to 569, and 576 to 594; these read PSQSESDVLQ, VSES…SQGL, SYSS…SAQP, and VQSS…SSIP. Phosphoserine occurs at positions 670 and 940. At threonine 1003 the chain carries Phosphothreonine. A Phosphoserine modification is found at serine 1041. 2 disordered regions span residues 1104 to 1163 and 1234 to 1264; these read QPGD…TDVY and IQTT…VSLS. Lysine 1112 participates in a covalent cross-link: Glycyl lysine isopeptide (Lys-Gly) (interchain with G-Cter in SUMO2). Over residues 1126–1136 the composition is skewed to basic and acidic residues; sequence PKEKAKGKEQG. Residue lysine 1137 forms a Glycyl lysine isopeptide (Lys-Gly) (interchain with G-Cter in SUMO2) linkage. Serine 1262, serine 1281, and serine 1282 each carry phosphoserine. At threonine 1394 the chain carries Phosphothreonine. At serine 1401 the chain carries Phosphoserine. Residues 1494–1588 are disordered; it reads VCSKKPRNKP…DEGFEPPAPS (95 aa). Positions 1510 to 1537 are enriched in low complexity; it reads IPSKPSSISKTSDPPVSKTTTTKTPSTK. A compositionally biased stretch (basic and acidic residues) spans 1545 to 1561; sequence IKAEPPPKKRKKWKEEF. Low complexity predominate over residues 1562–1575; the sequence is SSSQSESSPEVRSS.

Interacts with TET1.

The protein resides in the chromosome. Its function is as follows. Plays an essential role in the protection and maintenance of transcriptional and developmental programs. Protects many bivalent promoters and poised enhancers from hypermethylation, showing a marked preference for these regulatory elements over other types of promoters or enhancers. Mechanistically, cooperates with TET1 and binds to DNA in a common complex to inhibit the binding of DNMT3A/3B and therefore de novo methylation. The protein is Glutamine and serine-rich protein 1 of Mus musculus (Mouse).